Consider the following 729-residue polypeptide: Polyribonucleotide nucleotidyltransferase (729 aa).

Residues 399–419 are disordered; the sequence is YMHNYNFPPYSTGETGRVGSP. Positions 509 and 515 each coordinate Mg(2+). One can recognise a KH domain in the interval 575 to 634; it reads PRVISVKIPVDKIGEVIGPKGKMINQIQADSGAEITVEDDGTIYIGAADGPAAETARSAI. In terms of domain architecture, S1 motif spans 646–718; sequence GERYLGTIVK…ARGKISLAPG (73 aa).

It belongs to the polyribonucleotide nucleotidyltransferase family. Requires Mg(2+) as cofactor.

Its subcellular location is the cytoplasm. It carries out the reaction RNA(n+1) + phosphate = RNA(n) + a ribonucleoside 5'-diphosphate. In terms of biological role, involved in mRNA degradation. Catalyzes the phosphorolysis of single-stranded polyribonucleotides processively in the 3'- to 5'-direction. The chain is Polyribonucleotide nucleotidyltransferase from Parafrankia sp. (strain EAN1pec).